A 1512-amino-acid chain; its full sequence is DNA polymerase (1512 aa).

It belongs to the DNA polymerase type-B family.

The protein localises to the host nucleus. The catalysed reaction is DNA(n) + a 2'-deoxyribonucleoside 5'-triphosphate = DNA(n+1) + diphosphate. The protein is DNA polymerase (57/58) of Ictalurid herpesvirus 1 (strain Auburn) (IcHV-1).